Reading from the N-terminus, the 396-residue chain is Cytochrome b (396 aa).

The next 4 helical transmembrane spans lie at 32–52 (FGSLLGVNLVILIISGLTLAM), 76–98 (WLLRYIHANGASFFFIWVYLHIG), 113–133 (LWSIGVVIFILMMATAFIGYV), and 179–199 (FFSLHYLLPFILAALVVMHLL). Residues His-82 and His-96 each contribute to the heme b site. Residues His-183 and His-197 each coordinate heme b. Residue His-202 coordinates a ubiquinone. The next 4 membrane-spanning stretches (helical) occupy residues 225–245 (FTSKDLVGFVWMAILLSIFVF), 289–309 (LGGVIAMFGALLILFPLALIH), 321–341 (LLNLLFWIFVFNFFVLLWVGA), and 348–368 (YILIGQISTIIYFLYFVILMI).

The protein belongs to the cytochrome b family. Fungal cytochrome b-c1 complex contains 10 subunits; 3 respiratory subunits, 2 core proteins and 5 low-molecular weight proteins. Cytochrome b-c1 complex is a homodimer. Requires heme b as cofactor.

It localises to the mitochondrion inner membrane. Component of the ubiquinol-cytochrome c reductase complex (complex III or cytochrome b-c1 complex) that is part of the mitochondrial respiratory chain. The b-c1 complex mediates electron transfer from ubiquinol to cytochrome c. Contributes to the generation of a proton gradient across the mitochondrial membrane that is then used for ATP synthesis. This chain is Cytochrome b (cob), found in Spizellomyces punctatus.